We begin with the raw amino-acid sequence, 412 residues long: Serine hydroxymethyltransferase (412 aa).

(6S)-5,6,7,8-tetrahydrofolate-binding positions include L117 and 121–123; that span reads GHL. Residue K226 is modified to N6-(pyridoxal phosphate)lysine. (6S)-5,6,7,8-tetrahydrofolate contacts are provided by residues E242 and 350 to 352; that span reads SPF.

The protein belongs to the SHMT family. As to quaternary structure, homodimer. It depends on pyridoxal 5'-phosphate as a cofactor.

Its subcellular location is the cytoplasm. The catalysed reaction is (6R)-5,10-methylene-5,6,7,8-tetrahydrofolate + glycine + H2O = (6S)-5,6,7,8-tetrahydrofolate + L-serine. It functions in the pathway one-carbon metabolism; tetrahydrofolate interconversion. It participates in amino-acid biosynthesis; glycine biosynthesis; glycine from L-serine: step 1/1. Catalyzes the reversible interconversion of serine and glycine with tetrahydrofolate (THF) serving as the one-carbon carrier. Also exhibits THF-independent aldolase activity toward beta-hydroxyamino acids, producing glycine and aldehydes, via a retro-aldol mechanism. The polypeptide is Serine hydroxymethyltransferase (Methanosarcina mazei (strain ATCC BAA-159 / DSM 3647 / Goe1 / Go1 / JCM 11833 / OCM 88) (Methanosarcina frisia)).